The chain runs to 166 residues: Protein BioX (166 aa).

The next 5 membrane-spanning stretches (helical) occupy residues 12-32, 33-53, 55-75, 87-107, and 117-137; these read ISLL…TGIP, GSEF…FGFK, YFLA…HSIL, VGLI…AGPI, and AFTL…GMVI.

It localises to the cell membrane. Does not seem to be a permease of pimelate. Its role in biotin synthesis is not clear. The chain is Protein BioX (bioX) from Lysinibacillus sphaericus (Bacillus sphaericus).